Here is a 200-residue protein sequence, read N- to C-terminus: Recombination protein RecR (200 aa).

A C4-type zinc finger spans residues 59 to 74 (CEVCGNVCESSPCTIC). The 96-residue stretch at 82-177 (GTICVVEEPK…KVTRLASGLP (96 aa)) folds into the Toprim domain.

Belongs to the RecR family.

May play a role in DNA repair. It seems to be involved in an RecBC-independent recombinational process of DNA repair. It may act with RecF and RecO. The protein is Recombination protein RecR of Bifidobacterium animalis subsp. lactis (strain AD011).